The following is an 807-amino-acid chain: Dynein axonemal intermediate chain 4 (807 aa).

Polar residues-rich tracts occupy residues 1–11 (MHSSPTSTRKQ) and 22–31 (PRKSISFINP). Disordered stretches follow at residues 1–44 (MHSS…AASN) and 300–320 (YSSK…DSES). Residues 32 to 43 (SKSSAGKGYAAS) are compositionally biased toward low complexity. Residues 308 to 317 (AKDRDPKIQD) show a composition bias toward basic and acidic residues. WD repeat units follow at residues 493-533 (QSSY…NIPV), 542-590 (KHLG…DCHD), 617-657 (SRQA…QYLE), 661-701 (GHKG…PFLS), 704-743 (PTTY…LDPL), and 749-788 (NPGI…TASD).

Part of the multisubunit axonemal dynein complex formed at least of two heavy chains and a number of intermediate and light chains. Associated with axonemal dynein subunits such as, DNAH2, DNAI3, and DYNLT1. Interacts with DYNLT1. In terms of tissue distribution, highly expressed in tissues containing motile cilia, including the trachea, lung, oviduct, and testis.

The protein resides in the cytoplasm. Its subcellular location is the cytoskeleton. It localises to the flagellum axoneme. It is found in the cilium axoneme. The protein localises to the dynein axonemal particle. Functionally, plays a critical role in the assembly of axonemal dynein complex, thereby playing a role in ciliary motility. This is Dynein axonemal intermediate chain 4 (Dnai4) from Mus musculus (Mouse).